The following is a 247-amino-acid chain: Probable enoyl-CoA hydratase echA6 (247 aa).

The protein belongs to the enoyl-CoA hydratase/isomerase family.

It catalyses the reaction a (3S)-3-hydroxyacyl-CoA = a (2E)-enoyl-CoA + H2O. The catalysed reaction is a 4-saturated-(3S)-3-hydroxyacyl-CoA = a (3E)-enoyl-CoA + H2O. Could possibly oxidize fatty acids using specific components. This chain is Probable enoyl-CoA hydratase echA6 (echA6), found in Mycobacterium leprae (strain TN).